Consider the following 204-residue polypeptide: Large ribosomal subunit protein uL4 (204 aa).

A disordered region spans residues 44–76 (RAGTHRTKGMGEISGTTKKPYRQKGTGSARQGS).

Belongs to the universal ribosomal protein uL4 family. As to quaternary structure, part of the 50S ribosomal subunit.

In terms of biological role, one of the primary rRNA binding proteins, this protein initially binds near the 5'-end of the 23S rRNA. It is important during the early stages of 50S assembly. It makes multiple contacts with different domains of the 23S rRNA in the assembled 50S subunit and ribosome. Functionally, forms part of the polypeptide exit tunnel. The chain is Large ribosomal subunit protein uL4 from Gluconobacter oxydans (strain 621H) (Gluconobacter suboxydans).